A 234-amino-acid chain; its full sequence is Thymidylate kinase (234 aa).

Residue 10–17 (GGEGSGKT) participates in ATP binding.

This sequence belongs to the thymidylate kinase family.

The catalysed reaction is dTMP + ATP = dTDP + ADP. In terms of biological role, phosphorylation of dTMP to form dTDP in both de novo and salvage pathways of dTTP synthesis. The polypeptide is Thymidylate kinase (Cyanothece sp. (strain PCC 7425 / ATCC 29141)).